We begin with the raw amino-acid sequence, 99 residues long: Integration host factor subunit alpha (99 aa).

It belongs to the bacterial histone-like protein family. In terms of assembly, heterodimer of an alpha and a beta chain.

Functionally, this protein is one of the two subunits of integration host factor, a specific DNA-binding protein that functions in genetic recombination as well as in transcriptional and translational control. This chain is Integration host factor subunit alpha, found in Psychrobacter cryohalolentis (strain ATCC BAA-1226 / DSM 17306 / VKM B-2378 / K5).